We begin with the raw amino-acid sequence, 669 residues long: Cysteine-rich receptor-like protein kinase 34 (669 aa).

Positions 1–23 (MKLKISFLPTFLIFLISLDSVTA) are cleaved as a signal peptide. 2 consecutive Gnk2-homologous domains span residues 24 to 123 (QEIC…NVSF) and 133 to 246 (ETLY…LYPY). The Extracellular segment spans residues 24–285 (QEICFSGFFK…SDRANTTIKG (262 aa)). Asparagine 35, asparagine 52, asparagine 103, asparagine 120, asparagine 147, asparagine 172, asparagine 252, and asparagine 280 each carry an N-linked (GlcNAc...) asparagine glycan. The chain crosses the membrane as a helical span at residues 286-306 (IIVAIVVPIIVILVSLVVLLV). Over 307-669 (VCRRKKSYKT…DASITEFYPR (363 aa)) the chain is Cytoplasmic. Residues 345–624 (FSDSNMIGRG…MMLTSSTTTL (280 aa)) form the Protein kinase domain. Residues 351–359 (IGRGGFGEV) and lysine 373 each bind ATP. Tyrosine 418 is subject to Phosphotyrosine. Aspartate 470 functions as the Proton acceptor in the catalytic mechanism. The residue at position 474 (serine 474) is a Phosphoserine. The residue at position 510 (threonine 510) is a Phosphothreonine. Tyrosine 518 is modified (phosphotyrosine).

The protein belongs to the protein kinase superfamily. Ser/Thr protein kinase family. CRK subfamily.

The protein resides in the membrane. The catalysed reaction is L-seryl-[protein] + ATP = O-phospho-L-seryl-[protein] + ADP + H(+). The enzyme catalyses L-threonyl-[protein] + ATP = O-phospho-L-threonyl-[protein] + ADP + H(+). The protein is Cysteine-rich receptor-like protein kinase 34 of Arabidopsis thaliana (Mouse-ear cress).